The following is an 87-amino-acid chain: Small ribosomal subunit protein bS20 (87 aa).

This sequence belongs to the bacterial ribosomal protein bS20 family.

In terms of biological role, binds directly to 16S ribosomal RNA. In Shigella flexneri, this protein is Small ribosomal subunit protein bS20.